Consider the following 25-residue polypeptide: GLLSVLGSVAKHVLPHVVPVIAEHL.

At L25 the chain carries Leucine amide.

Expressed by the skin dorsal glands.

Its subcellular location is the secreted. Antibacterial peptide with wide spectrum of activity. Active against the Gram-positive bacteria B.cereus (MIC=50 ug/ml), E.faecalis (MIC=25 ug/ml), L.lactis (MIC=1.5 ug/ml), L.innocua (MIC=25 ug/ml), S.aureus (MIC=3 ug/ml), S.epidermidis (MIC=12 ug/ml) and S.uberis (MIC=12 ug/ml), and against the Gram-negative bacteria E.coli (MIC=100 ug/ml) and P.multocida (MIC=25 ug/ml). The chain is Caerin 1.1 from Litoria peronii (Emerald spotted tree frog).